Reading from the N-terminus, the 413-residue chain is Palmitoyltransferase ZDHHC6 (413 aa).

The Cytoplasmic portion of the chain corresponds to Met-1–Pro-24. The helical transmembrane segment at Ile-25 to Trp-45 threads the bilayer. At Tyr-46 to Asn-57 the chain is on the lumenal side. A helical membrane pass occupies residues Phe-58–Val-78. Over Gly-79–Ser-143 the chain is Cytoplasmic. The 51-residue stretch at Gln-99–Leu-149 folds into the DHHC domain. Catalysis depends on Cys-129, which acts as the S-palmitoyl cysteine intermediate. Residues Phe-144–Met-164 traverse the membrane as a helical segment. Residues Thr-165–Thr-205 lie on the Lumenal side of the membrane. A helical transmembrane segment spans residues Thr-206–Ile-226. At Gln-227 to Arg-413 the chain is on the cytoplasmic side. The SH3 domain maps to Val-313 to Cys-398. S-palmitoyl cysteine attachment occurs at residues Cys-328, Cys-329, and Cys-343. The Di-lysine motif motif lies at Lys-410–Arg-413.

It belongs to the DHHC palmitoyltransferase family. Homooligomerizes. Interacts with SELENOK. Palmitoylated at 3 different sites by ZDHHC16. The combination of the different palmitoylation events strongly affects the quaternary assembly of ZDHHC6, its localization, stability and function. Palmitoylation at Cys-328 accelerates the turnover of ZDHHC6. Depalmitoylated by LYPLA2.

It localises to the endoplasmic reticulum membrane. It catalyses the reaction L-cysteinyl-[protein] + hexadecanoyl-CoA = S-hexadecanoyl-L-cysteinyl-[protein] + CoA. It carries out the reaction L-cysteinyl-[protein] + octadecanoyl-CoA = S-octadecanoyl-L-cysteinyl-[protein] + CoA. Endoplasmic reticulum palmitoyl acyltransferase that mediates palmitoylation of proteins such as AMFR, CALX, ITPR1 and TFRC. Palmitoylates calnexin (CALX), which is required for its association with the ribosome-translocon complex and efficient folding of glycosylated proteins. Mediates palmitoylation of AMFR, promoting AMFR distribution to the peripheral endoplasmic reticulum. Together with SELENOK, palmitoylates ITPR1 in immune cells, leading to regulate ITPR1 stability and function. Stearoyltransferase that mediates stearoylation of TFRC to inhibit TFRC-mediated activation of the JNK pathway and mitochondrial fragmentation. This Homo sapiens (Human) protein is Palmitoyltransferase ZDHHC6.